The chain runs to 374 residues: 4-hydroxybenzoate polyprenyltransferase, mitochondrial (374 aa).

The N-terminal 34 residues, 1–34 (MLRWGGAGLARGLRAVRSAWLRGPRGLPLALVRS), are a transit peptide targeting the mitochondrion. Over 35–83 (AGVPGARDRRAPAPGTQRGRALSLSAAAVVNSAPRPLQPYLRLMRLDKP) the chain is Mitochondrial matrix. A helical transmembrane segment spans residues 84-104 (IGTWLLYLPCTWSIGLAADPG). Topologically, residues 105 to 108 (CFPD) are mitochondrial intermembrane. The helical transmembrane segment at 109–129 (WYMLSLFGTGAILMRGAGCTI) threads the bilayer. The Mitochondrial matrix portion of the chain corresponds to 130–148 (NDMWDRDFDKKVTRTANRP). The chain crosses the membrane as a helical span at residues 149-169 (IAAGDISTFQSFVFLGGQLTL). The Mitochondrial intermembrane portion of the chain corresponds to 170–172 (ALG). Residues 173–193 (VLLCLNYYSIAMGAASLLLVV) form a helical membrane-spanning segment. Topologically, residues 194–200 (TYPLVKR) are mitochondrial matrix. The chain crosses the membrane as a helical span at residues 201–221 (ITFWPQLALGLTFNWGALLGW). The Mitochondrial intermembrane segment spans residues 222–230 (SAVKGSCDP). Residues 231–251 (AVCLPLYFSGVMWTLIYDTIY) traverse the membrane as a helical segment. At 252–277 (AHQDKKDDALIGLKSTALLFQENTRQ) the chain is on the mitochondrial matrix side. Residues 278–298 (WLSGFGVAMVAALSLAGANNG) traverse the membrane as a helical segment. Residues 299–332 (QTVPYYAAVAAVGAHLAHQIYTVDIHRAEDCWDK) are Mitochondrial intermembrane-facing. A helical transmembrane segment spans residues 333–353 (FTSNRTVGMLLFLGIVLGNLC). The Mitochondrial matrix segment spans residues 354–374 (KEKTEEAKDAEAVRVGSEQTS).

This sequence belongs to the UbiA prenyltransferase family. Requires Mg(2+) as cofactor.

It localises to the mitochondrion inner membrane. It catalyses the reaction an all-trans-polyprenyl diphosphate + 4-hydroxybenzoate = a 4-hydroxy-3-(all-trans-polyprenyl)benzoate + diphosphate. It carries out the reaction all-trans-decaprenyl diphosphate + 4-hydroxybenzoate = 4-hydroxy-3-(all-trans-decaprenyl)benzoate + diphosphate. The catalysed reaction is all-trans-nonaprenyl diphosphate + 4-hydroxybenzoate = 4-hydroxy-3-(all-trans-nonaprenyl)benzoate + diphosphate. The protein operates within cofactor biosynthesis; ubiquinone biosynthesis. Functionally, mediates the second step in the final reaction sequence of coenzyme Q (CoQ) biosynthesis. Catalyzes the prenylation of para-hydroxybenzoate (PHB) with an all-trans polyprenyl donor (such as all-trans-nonaprenyl diphosphate). The length of the polyprenyl side chain varies depending on the species, in humans, the side chain is comprised of 10 isoprenyls producing CoQ10 (also known as ubiquinone), whereas rodents predominantly generate CoQ9. However, this specificity is not complete, human tissues have low amounts of CoQ9 and rodent organs contain some CoQ10. Plays a central role in the biosynthesis of CoQ9. CoQ9 is a vital molecule that transports electrons from mitochondrial respiratory chain complexes. CoQs also function as cofactors for uncoupling protein and play a role as regulators of the extracellularly-induced ceramide-dependent apoptotic pathway. Regulates mitochondrial permeability transition pore (mPTP) opening and ROS production (pivotal events in cell death) in a tissue specific manner. In Mus musculus (Mouse), this protein is 4-hydroxybenzoate polyprenyltransferase, mitochondrial.